Reading from the N-terminus, the 513-residue chain is Matrix metalloproteinase-27 (513 aa).

The N-terminal stretch at 1–17 is a signal peptide; sequence MKRLLLLFLFFITFSSA. The propeptide at 18-98 is activation peptide; it reads FPLVRMTENE…PRCGVPDVGQ (81 aa). Asn55 carries an N-linked (GlcNAc...) asparagine glycan. Residues 89-96 carry the Cysteine switch motif; the sequence is PRCGVPDV. Cys91 contributes to the Zn(2+) binding site. Asn110 carries N-linked (GlcNAc...) asparagine glycosylation. 2 residues coordinate Ca(2+): Asp121 and Asp155. His165 contacts Zn(2+). Ca(2+) is bound by residues Asp173, Gly174, and Val178. Residue His181 coordinates Zn(2+). 2 residues coordinate Ca(2+): Gly188 and Asp192. Residue His194 participates in Zn(2+) binding. Ca(2+) is bound by residues Asp196 and Glu199. Position 216 (His216) interacts with Zn(2+). Glu217 is an active-site residue. Positions 220 and 226 each coordinate Zn(2+). 4 Hemopexin repeats span residues 276-325, 326-371, 373-421, and 422-465; these read PHAC…WPSL, PADL…GFPG, VKKI…FPGI, and SIRV…WFQC. Cys279 and Cys465 are disulfide-bonded. Asp286 contributes to the Ca(2+) binding site. Positions 377 and 426 each coordinate Ca(2+). Asn452 carries an N-linked (GlcNAc...) asparagine glycan. The tract at residues 466 to 513 is required for retention in the endoplasmic reticulum; the sequence is KEPKNSSFGFDINKEKAHSGGIKILYHKSLSLFIFGIVHLLKNTSIYQ.

Belongs to the peptidase M10A family. The cofactor is Ca(2+). Zn(2+) serves as cofactor. N-glycosylated. Expressed in B-cells. Expressed in a subset of endometrial macrophages related to menstruation and in ovarian and peritoneal endometriotic lesions (at protein level).

It localises to the endoplasmic reticulum. In terms of biological role, matrix metalloproteinases degrade protein components of the extracellular matrix such as fibronectin, laminin, gelatins and/or collagens. This is Matrix metalloproteinase-27 (MMP27) from Homo sapiens (Human).